The chain runs to 90 residues: ATP-dependent Clp protease adapter protein ClpS (90 aa).

Belongs to the ClpS family. As to quaternary structure, binds to the N-terminal domain of the chaperone ClpA.

Its function is as follows. Involved in the modulation of the specificity of the ClpAP-mediated ATP-dependent protein degradation. This chain is ATP-dependent Clp protease adapter protein ClpS, found in Helicobacter pylori (strain J99 / ATCC 700824) (Campylobacter pylori J99).